Consider the following 454-residue polypeptide: tRNA-2-methylthio-N(6)-dimethylallyladenosine synthase (454 aa).

The region spanning 11–128 (KKLYIQTHGC…LPEMIETPRE (118 aa)) is the MTTase N-terminal domain. [4Fe-4S] cluster contacts are provided by cysteine 20, cysteine 57, cysteine 91, cysteine 165, cysteine 169, and cysteine 172. Residues 151–382 (EADGATAFVS…QTRIIQQAQE (232 aa)) enclose the Radical SAM core domain. A TRAM domain is found at 385–449 (RRMVGNTERV…PNSLRGVLLG (65 aa)).

This sequence belongs to the methylthiotransferase family. MiaB subfamily. In terms of assembly, monomer. Requires [4Fe-4S] cluster as cofactor.

It is found in the cytoplasm. It carries out the reaction N(6)-dimethylallyladenosine(37) in tRNA + (sulfur carrier)-SH + AH2 + 2 S-adenosyl-L-methionine = 2-methylsulfanyl-N(6)-dimethylallyladenosine(37) in tRNA + (sulfur carrier)-H + 5'-deoxyadenosine + L-methionine + A + S-adenosyl-L-homocysteine + 2 H(+). Catalyzes the methylthiolation of N6-(dimethylallyl)adenosine (i(6)A), leading to the formation of 2-methylthio-N6-(dimethylallyl)adenosine (ms(2)i(6)A) at position 37 in tRNAs that read codons beginning with uridine. This is tRNA-2-methylthio-N(6)-dimethylallyladenosine synthase from Saccharophagus degradans (strain 2-40 / ATCC 43961 / DSM 17024).